A 179-amino-acid chain; its full sequence is MASSASGMEEVRSSVLTPLKLVGLVCIFLALCLDIGAVLSPAWVTADNQYYLSLWESCKKSENRWICDSTLQSDWQIATLALLLGGAAIILIAFLVGLISICVGSRRRFYRPVAVMLFAAVVLQVCGLVLYPIKFIETVTLKIYHEFNWGYGLAWGATIFSFGGAILYCLNPKNYEDYY.

Helical transmembrane passes span 21-41, 81-101, 113-133, and 150-170; these read LVGL…VLSP, ALLL…LISI, VAVM…LYPI, and GYGL…LYCL.

This sequence belongs to the TMEM47 family.

It localises to the membrane. The protein resides in the cell junction. It is found in the adherens junction. In terms of biological role, regulates cell junction organization in epithelial cells. May play a role in the transition from adherens junction to tight junction assembly. The chain is Transmembrane protein 47 (tmem47) from Xenopus laevis (African clawed frog).